A 2002-amino-acid polypeptide reads, in one-letter code: Methylcytosine dioxygenase TET2 (2002 aa).

Residues 1–11 are compositionally biased toward basic and acidic residues; it reads MEQDRTNHVEG. A disordered region spans residues 1–22; sequence MEQDRTNHVEGNRLSPFLIPSP. Residues serine 15, serine 75, and serine 99 each carry the phosphoserine modification. A compositionally biased stretch (basic and acidic residues) spans 113-124; sequence KQDQKANGERRN. 7 disordered regions span residues 113–154, 266–287, 349–368, 390–488, 703–748, 930–949, and 1075–1095; these read KQDQ…VSSV, HPSH…LPPK, GEEF…GSSE, DSFS…VNRN, LNQQ…QQKL, VPDQ…TQKH, and DSHT…PTKR. 2 stretches are compositionally biased toward polar residues: residues 126–143 and 267–283; these read GVSQ…NVSD and PSHT…SNSE. Residues 397-416 are compositionally biased toward pro residues; that stretch reads TPPPPSQLLLSPPPPLPQVP. 2 stretches are compositionally biased toward polar residues: residues 479-488 and 703-718; these read RPQNNCVNRN and LNQQ…NSHL. Low complexity predominate over residues 731 to 748; the sequence is QPSQSSHLPQNQQQQQKL. Composition is skewed to polar residues over residues 935 to 944 and 1081 to 1095; these read GSHTQTPPQK and LEQQ…PTKR. 2 positions are modified to phosphoserine: serine 1107 and serine 1109. Zn(2+) is bound by residues cysteine 1133, cysteine 1135, cysteine 1193, histidine 1219, and cysteine 1221. Arginine 1261 provides a ligand contact to 2-oxoglutarate. Residues cysteine 1271, cysteine 1273, cysteine 1289, and cysteine 1298 each contribute to the Zn(2+) site. Residues 1290–1303 form an interaction with DNA region; that stretch reads SWSMYYNGCKFARS. Lysine 1299 participates in a covalent cross-link: Glycyl lysine isopeptide (Lys-Gly) (interchain with G-Cter in ubiquitin). Zn(2+) is bound at residue cysteine 1358. Residue cysteine 1374 coordinates 2-oxoglutarate. Histidine 1380 provides a ligand contact to Zn(2+). Fe cation is bound by residues histidine 1382 and aspartate 1384. Asparagine 1387 is a binding site for substrate. Histidine 1416 is a binding site for 2-oxoglutarate. Disordered stretches follow at residues 1475–1507 and 1521–1587; these read AAEK…NASQ and VMQQ…HTSD. The span at 1477 to 1487 shows a compositional bias: low complexity; it reads EKLSSLENSSN. Residues 1496–1507 show a composition bias toward polar residues; that stretch reads PSRTKQTENASQ. 2 stretches are compositionally biased toward low complexity: residues 1523–1532 and 1539–1551; these read QQSQQPQPLQ and QQQQ…QPHH. Polar residues predominate over residues 1554–1568; the sequence is TESVNSYSASGSTNP. Arginine 1682 bears the Asymmetric dimethylarginine mark. Histidine 1881 serves as a coordination point for Fe cation. 1896-1898 lines the 2-oxoglutarate pocket; sequence RIS. 1902–1904 provides a ligand contact to substrate; it reads YQH. Residue histidine 1912 coordinates Zn(2+). A disordered region spans residues 1932–1961; sequence CEKYGPDYVPQKSHGKKVKREPAEPHETSE. The segment covering 1951–1960 has biased composition (basic and acidic residues); it reads REPAEPHETS.

This sequence belongs to the TET family. Interacts with HCFC1. Interacts with OGT. Interacts with PROSER1; this interaction mediates TET2 O-GlcNAcylation and stability by promoting the interaction between OGT and TET2. Directly interacts (via C-terminus) with the DCAF1 component of the CRL4(VprBP) E3 ubiquitin-protein ligase complex. Fe(2+) serves as cofactor. Zn(2+) is required as a cofactor. May be glycosylated. It is unclear whether interaction with OGT leads to GlcNAcylation. According to a report, it is not GlcNAcylated by OGT. In contrast, another group reports GlcNAcylation by OGT in mouse ortholog. In terms of processing, monoubiquitinated at Lys-1299 by the DCX (DDB1-CUL4-X-box) E3 ubiquitin-protein ligase complex called CRL4(VprBP) or CUL4A-RBX1-DDB1-DCAF1/VPRBP complex; this modification promotes binding to DNA. Post-translationally, acetylated. Deacetylase HDAC6 acts as a valine sensor by binding to valine through its primate-specific SE14 repeat region and deacetylates TET2 following valine deprivation which promotes TET2-dependent DNA demethylation. As to expression, broadly expressed. Highly expressed in hematopoietic cells; highest expression observed in granulocytes. Expression is reduced in granulocytes from peripheral blood of patients affected by myelodysplastic syndromes.

Its subcellular location is the nucleus. It localises to the chromosome. It catalyses the reaction a 5-methyl-2'-deoxycytidine in DNA + 2-oxoglutarate + O2 = a 5-hydroxymethyl-2'-deoxycytidine in DNA + succinate + CO2. The enzyme catalyses a 5-hydroxymethyl-2'-deoxycytidine in DNA + 2-oxoglutarate + O2 = a 5-formyl-2'-deoxycytidine in DNA + succinate + CO2 + H2O. The catalysed reaction is a 5-formyl-2'-deoxycytidine in DNA + 2-oxoglutarate + O2 = a 5-carboxyl-2'-deoxycytidine in DNA + succinate + CO2 + H(+). In terms of biological role, dioxygenase that catalyzes the conversion of the modified genomic base 5-methylcytosine (5mC) into 5-hydroxymethylcytosine (5hmC) and plays a key role in active DNA demethylation. Has a preference for 5-hydroxymethylcytosine in CpG motifs. Also mediates subsequent conversion of 5hmC into 5-formylcytosine (5fC), and conversion of 5fC to 5-carboxylcytosine (5caC). Conversion of 5mC into 5hmC, 5fC and 5caC probably constitutes the first step in cytosine demethylation. Methylation at the C5 position of cytosine bases is an epigenetic modification of the mammalian genome which plays an important role in transcriptional regulation. In addition to its role in DNA demethylation, also involved in the recruitment of the O-GlcNAc transferase OGT to CpG-rich transcription start sites of active genes, thereby promoting histone H2B GlcNAcylation by OGT. This Homo sapiens (Human) protein is Methylcytosine dioxygenase TET2 (TET2).